The primary structure comprises 188 residues: MEIKLFNKWDTTEIVVKDPSLRHYINLEPIFVPHTSGRNSGRMFEKAKMNIVERLVNNLMRAEQNTGQKQVTLSIVEEAFEIIEKRTNENPVKVLVEALENGGPREETTRISYGGIAFLQSVDVSPSRRLDTALRNIAIGTLNSAHKNKKSAAQCLADEIMFASKADMQRSFAVRKKEEKERVAQSAR.

Belongs to the universal ribosomal protein uS7 family. In terms of assembly, part of the 30S ribosomal subunit.

One of the primary rRNA binding proteins, it binds directly to 16S rRNA where it nucleates assembly of the head domain of the 30S subunit. Is located at the subunit interface close to the decoding center. This is Small ribosomal subunit protein uS7 from Methanococcus aeolicus (strain ATCC BAA-1280 / DSM 17508 / OCM 812 / Nankai-3).